The sequence spans 211 residues: Probable nicotinate-nucleotide adenylyltransferase (211 aa).

Belongs to the NadD family.

The enzyme catalyses nicotinate beta-D-ribonucleotide + ATP + H(+) = deamido-NAD(+) + diphosphate. It functions in the pathway cofactor biosynthesis; NAD(+) biosynthesis; deamido-NAD(+) from nicotinate D-ribonucleotide: step 1/1. Functionally, catalyzes the reversible adenylation of nicotinate mononucleotide (NaMN) to nicotinic acid adenine dinucleotide (NaAD). The polypeptide is Probable nicotinate-nucleotide adenylyltransferase (Legionella pneumophila (strain Lens)).